A 31-amino-acid chain; its full sequence is Bacteriocin lactocin-705 (31 aa).

Functionally, antibacterial activity against several lactic acid bacteria, Listeria, Streptococci, etc. The chain is Bacteriocin lactocin-705 from Lacticaseibacillus paracasei (Lactobacillus paracasei).